The primary structure comprises 139 residues: NADPH-dependent 7-cyano-7-deazaguanine reductase (139 aa).

The active-site Thioimide intermediate is the cysteine 34. The Proton donor role is filled by aspartate 41. Residues valine 56–leucine 58 and histidine 75–glutamate 76 contribute to the substrate site.

This sequence belongs to the GTP cyclohydrolase I family. QueF type 1 subfamily.

It is found in the cytoplasm. The enzyme catalyses 7-aminomethyl-7-carbaguanine + 2 NADP(+) = 7-cyano-7-deazaguanine + 2 NADPH + 3 H(+). Its pathway is tRNA modification; tRNA-queuosine biosynthesis. Catalyzes the NADPH-dependent reduction of 7-cyano-7-deazaguanine (preQ0) to 7-aminomethyl-7-deazaguanine (preQ1). The protein is NADPH-dependent 7-cyano-7-deazaguanine reductase of Methylobacillus flagellatus (strain ATCC 51484 / DSM 6875 / VKM B-1610 / KT).